The following is a 232-amino-acid chain: Orotidine 5'-phosphate decarboxylase (232 aa).

Substrate-binding positions include Asp-13, Lys-35, 62-71 (DLKFHDIPNT), Thr-122, Arg-182, Gln-191, Gly-211, and Arg-212. Lys-64 acts as the Proton donor in catalysis.

It belongs to the OMP decarboxylase family. Type 1 subfamily. Homodimer.

It catalyses the reaction orotidine 5'-phosphate + H(+) = UMP + CO2. It functions in the pathway pyrimidine metabolism; UMP biosynthesis via de novo pathway; UMP from orotate: step 2/2. Its function is as follows. Catalyzes the decarboxylation of orotidine 5'-monophosphate (OMP) to uridine 5'-monophosphate (UMP). The sequence is that of Orotidine 5'-phosphate decarboxylase from Pseudomonas fluorescens (strain Pf0-1).